The following is a 127-amino-acid chain: Aspartate 1-decarboxylase (127 aa).

Ser25 (schiff-base intermediate with substrate; via pyruvic acid) is an active-site residue. At Ser25 the chain carries Pyruvic acid (Ser). Position 57 (Thr57) interacts with substrate. The Proton donor role is filled by Tyr58. Substrate is bound at residue 73-75 (GAA).

Belongs to the PanD family. As to quaternary structure, heterooctamer of four alpha and four beta subunits. Pyruvate is required as a cofactor. Is synthesized initially as an inactive proenzyme, which is activated by self-cleavage at a specific serine bond to produce a beta-subunit with a hydroxyl group at its C-terminus and an alpha-subunit with a pyruvoyl group at its N-terminus.

The protein localises to the cytoplasm. The catalysed reaction is L-aspartate + H(+) = beta-alanine + CO2. Its pathway is cofactor biosynthesis; (R)-pantothenate biosynthesis; beta-alanine from L-aspartate: step 1/1. In terms of biological role, catalyzes the pyruvoyl-dependent decarboxylation of aspartate to produce beta-alanine. The chain is Aspartate 1-decarboxylase from Geobacillus sp. (strain WCH70).